The chain runs to 149 residues: Protegrin-3 (149 aa).

The N-terminal stretch at 1-29 (METQRASLCLGRWSLWLLLLALVVPSASA) is a signal peptide. Positions 30 to 130 (QALSYREAVL…DITCNEVQGV (101 aa)) are excised as a propeptide. The tract at residues 61–80 (DQPPKADEDPGTPKPVSFTV) is disordered. Cystine bridges form between Cys-85–Cys-96, Cys-107–Cys-124, Cys-136–Cys-145, and Cys-138–Cys-143. Arg-148 carries the arginine amide modification.

This sequence belongs to the cathelicidin family.

It localises to the secreted. Functionally, microbicidal activity. Active against E.coli, Listeria monocytogenes and C.albicans, in vitro. The chain is Protegrin-3 (NPG3) from Sus scrofa (Pig).